We begin with the raw amino-acid sequence, 115 residues long: Non-specific lipid-transfer protein Cor a 8.0101 (115 aa).

The first 23 residues, 1-23 (MGSLKLVCAVLLCMMVAAPVARA), serve as a signal peptide directing secretion. 4 disulfides stabilise this stretch: Cys27/Cys74, Cys37/Cys51, Cys52/Cys97, and Cys72/Cys111.

It belongs to the plant LTP family. As to quaternary structure, monomer. Expressed in seed (at protein level). Expressed in seed.

Functionally, plant non-specific lipid-transfer proteins transfer phospholipids as well as galactolipids across membranes. May play a role in wax or cutin deposition in the cell walls of expanding epidermal cells and certain secretory tissues. This is Non-specific lipid-transfer protein Cor a 8.0101 from Corylus avellana (European hazel).